The following is a 160-amino-acid chain: Protein cornichon homolog 3 (160 aa).

The Cytoplasmic portion of the chain corresponds to 1–10 (MAFTFAAFCY). A helical transmembrane segment spans residues 11–31 (MLSLVLCAALIFFAIWHIIAF). The Lumenal segment spans residues 32-72 (DELRTDFKSPIDQCNPVHARERLRNIERICFLLRKLVLPEY). The helical transmembrane segment at 73 to 93 (SIHSLFCVMFLCAQEWLTLGL) threads the bilayer. Over 94 to 138 (NVPLLFYHFWRYFHCPADSSELAYDPPVVMNADTLSYCQKEAWCK) the chain is Cytoplasmic. Residues 139–159 (LAFYLLSFFYYLYCMIYTLVS) traverse the membrane as a helical segment. Position 160 (serine 160) is a topological domain, lumenal.

It belongs to the cornichon family. As to quaternary structure, acts as an auxiliary subunit for AMPA-selective glutamate receptors (AMPARs). Found in a complex with GRIA1, GRIA2, GRIA3, GRIA4, CNIH2, CACNG2, CACNG3, CACNG4, CACNG5, CACNG7 and CACNG8. In terms of tissue distribution, brain. Expressed in the neocortex, hippocampal formation, and cerebellum (at protein level).

The protein resides in the postsynaptic cell membrane. In terms of biological role, regulates the trafficking and gating properties of AMPA-selective glutamate receptors (AMPARs). Promotes their targeting to the cell membrane and synapses and modulates their gating properties by regulating their rates of activation, deactivation and desensitization. The sequence is that of Protein cornichon homolog 3 (Cnih3) from Rattus norvegicus (Rat).